Here is a 629-residue protein sequence, read N- to C-terminus: Pentatricopeptide repeat-containing protein At1g63150 (629 aa).

PPR repeat units lie at residues 46-81 (ASGDYREILRNRLSDIIKVDDAVDLFGDMVKSRPFP), 82-116 (SIVEFNKLLSAVAKMNKFELVISLGEQMQTLGISH), 117-151 (DLYTYSIFINCFCRRSQLSLALAVLAKMMKLGYEP), 152-186 (DIVTLSSLLNGYCHSKRISDAVALVDQMVEMGYKP), 187-221 (DTFTFTTLIHGLFLHNKASEAVALVDQMVQRGCQP), 222-256 (DLVTYGTVVNGLCKRGDIDLALNLLNKMEAARIKA), 257-291 (NVVIFNTIIDSLCKYRHVEVAVDLFTEMETKGIRP), 292-326 (NVVTYNSLINCLCNYGRWSDASRLLSNMLEKKINP), 327-361 (NVVTFNALIDAFFKEGKLVEAEKLHEEMIQRSIDP), 362-396 (DTITYNLLINGFCMHNRLDEAKQMFKFMVSKDCLP), 397-431 (NIQTYNTLINGFCKCKRVEDGVELFREMSQRGLVG), 432-466 (NTVTYTTIIQGFFQAGDCDSAQMVFKQMVSNRVPT), 467-501 (DIMTYSILLHGLCSYGKLDTALVIFKYLQKSEMEL), 502-532 (NIFIYNTMIEGMCKAGKVGEAWDLFCSLSIK), 534-568 (DVVTYNTMISGLCSKRLLQEADDLFRKMKEDGTLP), and 569-603 (NSGTYNTLIRANLRDCDRAASAELIKEMRSSGFVG).

This sequence belongs to the PPR family. P subfamily.

This Arabidopsis thaliana (Mouse-ear cress) protein is Pentatricopeptide repeat-containing protein At1g63150.